The chain runs to 154 residues: Endoribonuclease YbeY (154 aa).

Positions 116, 120, and 126 each coordinate Zn(2+).

Belongs to the endoribonuclease YbeY family. It depends on Zn(2+) as a cofactor.

The protein localises to the cytoplasm. Single strand-specific metallo-endoribonuclease involved in late-stage 70S ribosome quality control and in maturation of the 3' terminus of the 16S rRNA. In Buchnera aphidicola subsp. Baizongia pistaciae (strain Bp), this protein is Endoribonuclease YbeY.